The chain runs to 151 residues: Ribonuclease H (151 aa).

The region spanning 5 to 146 is the RNase H type-1 domain; it reads ALPHVTIFTD…ADQLAREGVA (142 aa). Mg(2+)-binding residues include D14, E52, D74, and D138.

This sequence belongs to the RNase H family. Monomer. The cofactor is Mg(2+).

The protein localises to the cytoplasm. The enzyme catalyses Endonucleolytic cleavage to 5'-phosphomonoester.. In terms of biological role, endonuclease that specifically degrades the RNA of RNA-DNA hybrids. The sequence is that of Ribonuclease H from Nitrobacter hamburgensis (strain DSM 10229 / NCIMB 13809 / X14).